A 1448-amino-acid polypeptide reads, in one-letter code: DNA primase TraC (1448 aa).

Composition is skewed to basic and acidic residues over residues 844 to 856 (ARVQ…RDPN), 863 to 872 (SAAKEARKTA), and 882 to 898 (DAQR…RDRQ). Disordered stretches follow at residues 844 to 915 (ARVQ…INVP) and 952 to 982 (QGAA…QQAQ). Residues 964–982 (AQPAPEAQGEAQKPAQQAQ) are compositionally biased toward low complexity. The Toprim domain occupies 1237–1325 (PALVISEGYA…GKAIFPIFAP (89 aa)). Residues 1414-1448 (ISQVQRDEQQHQEQKHVEKKQQQIEQRPRRAARIG) are disordered. Basic and acidic residues predominate over residues 1418-1441 (QRDEQQHQEQKHVEKKQQQIEQRP).

Its function is as follows. Required for autonomous replication in E.coli. Transferred into the recipient cell during bacterial conjugation. Catalyzes the synthesis of short oligoribonucleotide primers with CpA or pCpA at their 5'-termini on a single-stranded template DNA. The chain is DNA primase TraC (traC) from Escherichia coli.